The following is a 151-amino-acid chain: Mini-ribonuclease 3 (151 aa).

D30 is a catalytic residue.

Belongs to the MrnC RNase family. As to quaternary structure, homodimer. Mg(2+) is required as a cofactor.

The protein resides in the cytoplasm. Involved in correct processing of both the 5' and 3' ends of 23S rRNA precursor. Processes 30S rRNA precursor transcript even in absence of ribonuclease 3 (Rnc); Rnc processes 30S rRNA into smaller rRNA precursors. In Thermosynechococcus vestitus (strain NIES-2133 / IAM M-273 / BP-1), this protein is Mini-ribonuclease 3.